Consider the following 488-residue polypeptide: E3 ubiquitin-protein ligase TRIM34 (488 aa).

Residues 15–60 form an RING-type zinc finger; sequence CPICLELLTEPLSLDCGHSLCRACITVSNKEAVTSMGGKSSCPVCG. The B box-type zinc finger occupies 92–134; sequence KKRDLCDHHGEKLLLFCKEDRKVICWLCERSQEHRGHHTVLTE. Zn(2+) is bound by residues cysteine 97, histidine 100, cysteine 119, and histidine 125. The stretch at 131 to 239 forms a coiled coil; it reads VLTEEVFKEC…VRELISDVEC (109 aa). The B30.2/SPRY domain maps to 283–488; sequence LSRMLQMFRE…APMTLCPPSS (206 aa).

The protein belongs to the TRIM/RBCC family. As to quaternary structure, homotrimer. Interacts (via B-box and SPRY domain) with TRIM5. (Microbial infection) Interacts (via the B30.2/SPRY domain) with HIV-1 capsid complexes. In terms of tissue distribution, is the most abundant form. It is highly expressed in the placenta, spleen, colon and peripheral blood leukocytes.

Its subcellular location is the cytoplasm. The protein resides in the mitochondrion. It carries out the reaction S-ubiquitinyl-[E2 ubiquitin-conjugating enzyme]-L-cysteine + [acceptor protein]-L-lysine = [E2 ubiquitin-conjugating enzyme]-L-cysteine + N(6)-ubiquitinyl-[acceptor protein]-L-lysine.. Its pathway is protein modification; protein ubiquitination. In terms of biological role, functions as antiviral protein and contributes to the defense against retroviral infections. Acts as a capsid-specific restriction factor with the help of TRIM5 and prevents infection from non-host-adapted retroviruses. During influenza A virus infection, promotes programmed cell death by targeting ZBP1 for 'Lys-63'-linked polyubiquitination. In turn, promotes ZBP1 recruitment of RIPK3 to mediate virus-induced programmed necrosis. Negatively regulates the function of mitochondria by enhancing mitochondrial depolarization leading to cytochrome c release and mitochondria-dependent apoptosis. Also promotes the formation of multinucleated giant cells by means of cell fusion and phagocytosis in epithelial cells. This Homo sapiens (Human) protein is E3 ubiquitin-protein ligase TRIM34 (TRIM34).